We begin with the raw amino-acid sequence, 272 residues long: 3-methyl-2-oxobutanoate hydroxymethyltransferase (272 aa).

Mg(2+)-binding residues include Asp-43 and Asp-82. Residues 43–44 (DS), Asp-82, and Lys-112 each bind 3-methyl-2-oxobutanoate. Glu-114 is a binding site for Mg(2+). The Proton acceptor role is filled by Glu-179.

The protein belongs to the PanB family. As to quaternary structure, homodecamer; pentamer of dimers. Requires Mg(2+) as cofactor.

The protein resides in the cytoplasm. It carries out the reaction 3-methyl-2-oxobutanoate + (6R)-5,10-methylene-5,6,7,8-tetrahydrofolate + H2O = 2-dehydropantoate + (6S)-5,6,7,8-tetrahydrofolate. Its pathway is cofactor biosynthesis; (R)-pantothenate biosynthesis; (R)-pantoate from 3-methyl-2-oxobutanoate: step 1/2. Functionally, catalyzes the reversible reaction in which hydroxymethyl group from 5,10-methylenetetrahydrofolate is transferred onto alpha-ketoisovalerate to form ketopantoate. In Staphylococcus aureus (strain MRSA252), this protein is 3-methyl-2-oxobutanoate hydroxymethyltransferase.